The sequence spans 276 residues: SKA complex subunit 1 homolog (276 aa).

Residues 48-78 are a coiled coil; it reads VDVSLTAMEAQLQAVRRRLQEEREAFPKAKK.

It belongs to the SKA1 family.

This is SKA complex subunit 1 homolog from Oryza sativa subsp. japonica (Rice).